The primary structure comprises 468 residues: MTMASRSFLTDRQAEELHKSIIAYLTSLNLATTANTLRAELNLPEETFDLAKAKQYEGLLEKKWTSVIRLQKKVLDLQAENAHLKNEIENAGPLALSRKNQDPANWLPKGPPRYTLEGHRLPITSVAFHPVFSSLASASEDNTIKIWDWELGELERTLKGHTKAVLDVDFGGPRGNTLLASCSSDMSIKLWDPADQYKNIRTLHGHDHIVSSVRFVPANGTAGAGGNLLVSASKDNTLKLWDVTTGYCVKTIEGHNDWPRAVAPSADGRWLLSTGSDKAARLWDIGGTEPECRVVMFGHENFNLCCEFAPSTSYPHLARLAGHEKVPPANSAAEFMATGSRDKQIRLWDRRGQCIKVLEGHDNWVRGLAFHPAGKFLISVADDRTMRCWDLSQDGKCVQTLSGMFDGFVSCVRWAPGITKDGLAGGDAGDGTPKKKTGAEANGGVQMRCVVATGSVDGTEGKVRIFAN.

Positions 13-45 constitute a LisH domain; sequence QAEELHKSIIAYLTSLNLATTANTLRAELNLPE. Residues 66–92 are a coiled coil; it reads SVIRLQKKVLDLQAENAHLKNEIENAG. 8 WD repeats span residues 118-159, 161-201, 205-251, 254-293, 298-358, 360-399, 404-429, and 430-468; these read GHRL…RTLK, HTKA…KNIR, GHDH…CVKT, GHNDWPRAVAPSADGRWLLSTGSDKAARLWDIGGTEPECR, GHEN…IKVL, GHDNWVRGLAFHPAGKFLISVADDRTMRCWDLSQDGKCVQ, MFDGFVSCVRWAPGITKDGLAGGDAG, and DGTPKKKTGAEANGGVQMRCVVATGSVDGTEGKVRIFAN.

Belongs to the WD repeat LIS1/nudF family. In terms of assembly, self-associates. Interacts with NDL1 and dynein.

Its subcellular location is the cytoplasm. It localises to the cytoskeleton. The protein localises to the spindle pole. In terms of biological role, positively regulates the activity of the minus-end directed microtubule motor protein dynein. May enhance dynein-mediated microtubule sliding by targeting dynein to the microtubule plus end. Required for nuclear migration during vegetative growth as well as development. Required for retrograde early endosome (EE) transport from the hyphal tip. Required for localization of dynein to the mitotic spindle poles. Recruits additional proteins to the dynein complex at SPBs. This is Nuclear distribution protein PAC1-2 from Podospora anserina (strain S / ATCC MYA-4624 / DSM 980 / FGSC 10383) (Pleurage anserina).